Here is a 180-residue protein sequence, read N- to C-terminus: UPF0227 protein YcfP (180 aa).

It belongs to the UPF0227 family.

This Escherichia coli O139:H28 (strain E24377A / ETEC) protein is UPF0227 protein YcfP.